The chain runs to 120 residues: Flagellar protein FliT (120 aa).

Positions methionine 1–isoleucine 50 are required for homodimerization. The tract at residues leucine 60 to arginine 98 is fliD binding.

Belongs to the FliT family. In terms of assembly, homodimer. Interacts with FliD and FlhC.

Its subcellular location is the cytoplasm. The protein resides in the cytosol. Functionally, dual-function protein that regulates the transcription of class 2 flagellar operons and that also acts as an export chaperone for the filament-capping protein FliD. As a transcriptional regulator, acts as an anti-FlhDC factor; it directly binds FlhC, thus inhibiting the binding of the FlhC/FlhD complex to class 2 promoters, resulting in decreased expression of class 2 flagellar operons. As a chaperone, effects FliD transition to the membrane by preventing its premature polymerization, and by directing it to the export apparatus. In Yersinia pseudotuberculosis serotype IB (strain PB1/+), this protein is Flagellar protein FliT.